A 407-amino-acid chain; its full sequence is Probable cysteine protease atg4 (407 aa).

Cys136 (nucleophile) is an active-site residue. Residues Asp310 and His312 contribute to the active site.

Belongs to the peptidase C54 family.

Its subcellular location is the cytoplasm. It is found in the nucleus. It localises to the preautophagosomal structure. It carries out the reaction [protein]-C-terminal L-amino acid-glycyl-phosphatidylethanolamide + H2O = [protein]-C-terminal L-amino acid-glycine + a 1,2-diacyl-sn-glycero-3-phosphoethanolamine. Its function is as follows. Cysteine protease that is required for autophagy. Plays a key role in cytoplasm to vacuole transport (Cvt) and autophagy by mediating both proteolytic activation and delipidation of atg8. The protease activity is required for proteolytic activation of atg8 by the cleavage of the C-terminal amino acid of atg8 to reveal a C-terminal glycine. Azg8 ubiquitin-like activity requires the exposure of the glycine at the C-terminus for its conjugation to phosphatidylethanolamine (PE) and its insertion to membranes, which is necessary for autophagy. The atg8-PE conjugate mediates tethering between adjacent membranes and stimulates membrane hemifusion, leading to expansion of the autophagosomal membrane during autophagy. In addition to the protease activity, also catalyzes deconjugation of PE-conjugated forms of atg8 during macroautophagy since atg8 delipidation is required to release the protein from membranes, which facilitates multiple events during macroautophagy, and especially for efficient autophagosome biogenesis, the assembly of atg99-containing tubulovesicular clusters into phagophores/autophagosomes, and for the disassembly of PAS-associated ATG components. Atg8 delipidation by atg4 also recycles atg8-PE generated on inappropriate membranes to maintain a reservoir of unlipidated atg8 that is required for autophagosome formation at the PAS. The polypeptide is Probable cysteine protease atg4 (Aspergillus oryzae (strain ATCC 42149 / RIB 40) (Yellow koji mold)).